A 132-amino-acid polypeptide reads, in one-letter code: Small ribosomal subunit protein uS8 (132 aa).

It belongs to the universal ribosomal protein uS8 family. In terms of assembly, part of the 30S ribosomal subunit. Contacts proteins S5 and S12.

Functionally, one of the primary rRNA binding proteins, it binds directly to 16S rRNA central domain where it helps coordinate assembly of the platform of the 30S subunit. In Streptococcus equi subsp. equi (strain 4047), this protein is Small ribosomal subunit protein uS8.